We begin with the raw amino-acid sequence, 135 residues long: Peptide methionine sulfoxide reductase MsrB (135 aa).

The MsrB domain occupies 9–131 (DDYWRSKLTD…NSASIQFEEE (123 aa)). Cys48, Cys51, Cys97, and Cys100 together coordinate Zn(2+). The active-site Nucleophile is Cys120.

The protein belongs to the MsrB Met sulfoxide reductase family. The cofactor is Zn(2+).

It catalyses the reaction L-methionyl-[protein] + [thioredoxin]-disulfide + H2O = L-methionyl-(R)-S-oxide-[protein] + [thioredoxin]-dithiol. This is Peptide methionine sulfoxide reductase MsrB from Teredinibacter turnerae (strain ATCC 39867 / T7901).